The sequence spans 122 residues: Large ribosomal subunit protein uL14 (122 aa).

Belongs to the universal ribosomal protein uL14 family. In terms of assembly, part of the 50S ribosomal subunit. Forms a cluster with proteins L3 and L19. In the 70S ribosome, L14 and L19 interact and together make contacts with the 16S rRNA in bridges B5 and B8.

Binds to 23S rRNA. Forms part of two intersubunit bridges in the 70S ribosome. This Teredinibacter turnerae (strain ATCC 39867 / T7901) protein is Large ribosomal subunit protein uL14.